Here is a 119-residue protein sequence, read N- to C-terminus: Putative yippee-like protein Os10g0369500 (119 aa).

The region spanning 21-118 is the Yippee domain; it reads AVLKCRRCRV…LEKARMWKEA (98 aa). The Zn(2+) site is built by Cys-25, Cys-28, Cys-81, and Cys-84.

This sequence belongs to the yippee family.

The chain is Putative yippee-like protein Os10g0369500 from Oryza sativa subsp. japonica (Rice).